The chain runs to 586 residues: Urease subunit alpha (586 aa).

Residues 134 to 586 form the Urease domain; the sequence is GAIDTHIHFI…LPMAQRYFLF (453 aa). Ni(2+)-binding residues include His-139, His-141, and Lys-222. Lys-222 carries the N6-carboxylysine modification. Position 224 (His-224) interacts with substrate. Residues His-251 and His-277 each coordinate Ni(2+). His-325 functions as the Proton donor in the catalytic mechanism. Asp-365 contacts Ni(2+).

This sequence belongs to the metallo-dependent hydrolases superfamily. Urease alpha subunit family. As to quaternary structure, heterotrimer of UreA (gamma), UreB (beta) and UreC (alpha) subunits. Three heterotrimers associate to form the active enzyme. It depends on Ni cation as a cofactor. In terms of processing, carboxylation allows a single lysine to coordinate two nickel ions.

Its subcellular location is the cytoplasm. The enzyme catalyses urea + 2 H2O + H(+) = hydrogencarbonate + 2 NH4(+). It functions in the pathway nitrogen metabolism; urea degradation; CO(2) and NH(3) from urea (urease route): step 1/1. This Gloeothece citriformis (strain PCC 7424) (Cyanothece sp. (strain PCC 7424)) protein is Urease subunit alpha.